Consider the following 1059-residue polypeptide: Disks large-associated protein 2 (1059 aa).

Disordered regions lie at residues 31–54 (GEPE…PAEE) and 245–311 (KSHS…SDST). Positions 245–261 (KSHSLEGSSKSNINGTK) are enriched in polar residues. Basic and acidic residues predominate over residues 262 to 271 (SDSRVDDHHQ). The span at 272 to 285 (SHLSKHSKRSKSKE) shows a compositional bias: basic residues. A phosphoserine mark is found at Ser302, Ser308, Ser390, and Ser456. Positions 613–669 (YKKTPPPVPPRTTSKPLISVTAQSSTESTQDAYQDSRAQRMSPWPQDSRGGLYNSMD) are disordered. Positions 632–645 (VTAQSSTESTQDAY) are enriched in polar residues. A phosphoserine mark is found at Ser667, Ser670, Ser673, and Ser720. The segment at 723 to 756 (VQDSEFPDHQPYPRSDVETATDSDTESRGLREYH) is disordered. Position 743 is a phosphothreonine (Thr743). Ser745 is modified (phosphoserine). The span at 747–756 (TESRGLREYH) shows a compositional bias: basic and acidic residues. A phosphoserine mark is found at Ser776, Ser811, Ser983, and Ser1012. The interval 985-1025 (ERKEERKIPPPIPKKPPKGKFPITREKSLDLPDRQRQEARR) is disordered. Residues 1007–1025 (ITREKSLDLPDRQRQEARR) show a composition bias toward basic and acidic residues.

It belongs to the SAPAP family. Interacts with DLG4/PSD-95. Expressed in various brain areas.

It is found in the cell membrane. The protein resides in the postsynaptic density. The protein localises to the synapse. May play a role in the molecular organization of synapses and neuronal cell signaling. Could be an adapter protein linking ion channel to the subsynaptic cytoskeleton. May induce enrichment of PSD-95/SAP90 at the plasma membrane. The chain is Disks large-associated protein 2 from Mus musculus (Mouse).